Consider the following 658-residue polypeptide: Translation factor GUF1, mitochondrial (658 aa).

Residues 1–40 constitute a mitochondrion transit peptide; the sequence is MRGCLQTVRWLTSAWQRPPSYPPLSRAAPCRFFNVSIPRN. The tr-type G domain maps to 60-240; it reads DRFRNFCIVA…TVVEQIPAPV (181 aa). GTP contacts are provided by residues 69–76, 133–137, and 187–190; these read AHVDHGKS, DTPGH, and NKVD.

It belongs to the TRAFAC class translation factor GTPase superfamily. Classic translation factor GTPase family. LepA subfamily.

It is found in the mitochondrion inner membrane. The catalysed reaction is GTP + H2O = GDP + phosphate + H(+). Its function is as follows. Promotes mitochondrial protein synthesis. May act as a fidelity factor of the translation reaction, by catalyzing a one-codon backward translocation of tRNAs on improperly translocated ribosomes. Binds to mitochondrial ribosomes in a GTP-dependent manner. This Paracoccidioides brasiliensis (strain Pb18) protein is Translation factor GUF1, mitochondrial.